A 357-amino-acid chain; its full sequence is Heat-inducible transcription repressor HrcA (357 aa).

The protein belongs to the HrcA family.

Negative regulator of class I heat shock genes (grpE-dnaK-dnaJ and groELS operons). Prevents heat-shock induction of these operons. The chain is Heat-inducible transcription repressor HrcA from Chlorobium luteolum (strain DSM 273 / BCRC 81028 / 2530) (Pelodictyon luteolum).